A 205-amino-acid chain; its full sequence is Holliday junction branch migration complex subunit RuvA (205 aa).

The domain I stretch occupies residues 1–64 (MIGKLRGIVD…DEAIRLIGFT (64 aa)). The segment at 65–143 (TDSEREWFRL…DSMGLSAALE (79 aa)) is domain II. The segment at 144–152 (VGVNGEAVS) is flexible linker. Residues 153-205 (SVSAPARDAVSALVNLGYPQAQAMGAVAAAAKRLDDAASTEQLIRHGLKELAR) are domain III.

It belongs to the RuvA family. As to quaternary structure, homotetramer. Forms an RuvA(8)-RuvB(12)-Holliday junction (HJ) complex. HJ DNA is sandwiched between 2 RuvA tetramers; dsDNA enters through RuvA and exits via RuvB. An RuvB hexamer assembles on each DNA strand where it exits the tetramer. Each RuvB hexamer is contacted by two RuvA subunits (via domain III) on 2 adjacent RuvB subunits; this complex drives branch migration. In the full resolvosome a probable DNA-RuvA(4)-RuvB(12)-RuvC(2) complex forms which resolves the HJ.

Its subcellular location is the cytoplasm. In terms of biological role, the RuvA-RuvB-RuvC complex processes Holliday junction (HJ) DNA during genetic recombination and DNA repair, while the RuvA-RuvB complex plays an important role in the rescue of blocked DNA replication forks via replication fork reversal (RFR). RuvA specifically binds to HJ cruciform DNA, conferring on it an open structure. The RuvB hexamer acts as an ATP-dependent pump, pulling dsDNA into and through the RuvAB complex. HJ branch migration allows RuvC to scan DNA until it finds its consensus sequence, where it cleaves and resolves the cruciform DNA. This chain is Holliday junction branch migration complex subunit RuvA, found in Parvibaculum lavamentivorans (strain DS-1 / DSM 13023 / NCIMB 13966).